Consider the following 1663-residue polypeptide: Kotanin synthase (1663 aa).

The interval 19–168 (RPHEFSFNTQ…PLPVYGGPCH (150 aa)) is N-terminal acylcarrier protein transacylase domain (SAT). The 431-residue stretch at 301 to 731 (DSRIAVVGMS…GGNTSLLLEE (431 aa)) folds into the Ketosynthase family 3 (KS3) domain. Active-site for beta-ketoacyl synthase activity residues include Cys-474, His-609, and His-650. Positions 830–1149 (FIFSGQGSFY…SMCTLQETGV (320 aa)) are malonyl-CoA:ACP transacylase (MAT) domain. The product template (PT) domain stretch occupies residues 1209 to 1527 (TALVHQIMEE…PRILMNRFFD (319 aa)). Residues 1213–1349 (HQIMEESFRP…GVVRCGDRQS (137 aa)) are N-terminal hotdog fold. The PKS/mFAS DH domain occupies 1213-1523 (HQIMEESFRP…LRPLPRILMN (311 aa)). His-1245 serves as the catalytic Proton acceptor; for dehydratase activity. Positions 1376-1523 (QASRVSRDLV…LRPLPRILMN (148 aa)) are C-terminal hotdog fold. Asp-1434 acts as the Proton donor; for dehydratase activity in catalysis. The segment at 1544–1580 (DLPQVQHQPSPTTDSGPDDDPKDPNTGPLTPEVDLPV) is disordered. The 78-residue stretch at 1586–1663 (KANTKLVRGA…ELKEYLTASW (78 aa)) folds into the Carrier domain. O-(pantetheine 4'-phosphoryl)serine is present on Ser-1623.

It depends on pantetheine 4'-phosphate as a cofactor.

Its pathway is secondary metabolite biosynthesis. In terms of biological role, non-reducing polyketide synthase; part of the gene cluster that mediates the biosynthesis of the bicoumarin kotanin. The non-reducing polyketide synthase ktnS first catalyzes the formation of the pentaketidic 4,7-dihydroxy-5-methylcoumarin from acetyl coenzyme A and 4 malonyl coenzyme A molecules. Further O-methylation by ktnB leads to the formation of 7-demethylsiderin. Then, an oxidative phenol coupling catalyzed by the cytochrome P450 monooxygenase ktnC forms the 8,8'-dimer P-orlandin via dimerization the monomeric precursor, 7-demethylsiderin. P-orlandin is subsequently O-methylated in a stepwise fashion to demethylkotanin and kotanin. The polypeptide is Kotanin synthase (Aspergillus niger (strain ATCC MYA-4892 / CBS 513.88 / FGSC A1513)).